The sequence spans 1117 residues: Zinc finger E-box-binding homeobox 1 (1117 aa).

2 disordered regions span residues 1–103 (MADG…QNHD) and 122–143 (APEE…NGTP). A compositionally biased stretch (low complexity) spans 15-30 (PRRNNVTNYNTVVEAN). A phosphoserine mark is found at serine 31 and serine 33. The C2H2-type 1 zinc-finger motif lies at 150–173 (LTCPYCDRGYKRFTSLKEHIKYRH). Glycyl lysine isopeptide (Lys-Gly) (interchain with G-Cter in SUMO2) cross-links involve residues lysine 166 and lysine 175. 2 consecutive C2H2-type zinc fingers follow at residues 180–202 (FSCS…MTSH) and 220–242 (FKCT…LRIH). A C2H2-type 4; atypical zinc finger spans residues 248 to 272 (YECPNCKKRFSHSGSYSSHISSKKC). The tract at residues 278–307 (VNGRPRSGLKTSQCSSPSLSTSPGSPTRPQ) is disordered. Lysine 287 participates in a covalent cross-link: Glycyl lysine isopeptide (Lys-Gly) (interchain with G-Cter in SUMO2). Low complexity predominate over residues 288-304 (TSQCSSPSLSTSPGSPT). Residues serine 293 and serine 302 each carry the phosphoserine modification. Residues lysine 311 and lysine 315 each participate in a glycyl lysine isopeptide (Lys-Gly) (interchain with G-Cter in SUMO2) cross-link. Residue lysine 327 forms a Glycyl lysine isopeptide (Lys-Gly) (interchain with G-Cter in SUMO); alternate linkage. Lysine 327 participates in a covalent cross-link: Glycyl lysine isopeptide (Lys-Gly) (interchain with G-Cter in SUMO2); alternate. Residues lysine 419, lysine 473, lysine 484, lysine 495, and lysine 528 each participate in a glycyl lysine isopeptide (Lys-Gly) (interchain with G-Cter in SUMO2) cross-link. Disordered regions lie at residues 476–501 (IPAP…TDKS), 528–566 (KHYD…SQPP), and 613–687 (GQIP…SPLN). Residues 484-501 (KSEKLPEDLTVKSETDKS) show a composition bias toward basic and acidic residues. Residues 559 to 618 (DLSPSQPPLKNLLSLLKAYYALNAQPSTEELSKIADSVNLPLDGVKKWFEKMQAGQIPGQ) constitute a DNA-binding region (homeobox; atypical). Residues serine 657, serine 664, serine 671, and serine 678 each carry the phosphoserine modification. A compositionally biased stretch (polar residues) spans 673–687 (MNGSRSCTSSPSPLN). Threonine 680 is modified (phosphothreonine). Serine 682 is subject to Phosphoserine. Residue lysine 752 forms a Glycyl lysine isopeptide (Lys-Gly) (interchain with G-Cter in SUMO); alternate linkage. Lysine 752 participates in a covalent cross-link: Glycyl lysine isopeptide (Lys-Gly) (interchain with G-Cter in SUMO2); alternate. The tract at residues 834 to 876 (PPVKVIQPNGNQDERQDTSSEGVSTVEDQNDSDSTPPKKKTRK) is disordered. The segment covering 852–868 (SSEGVSTVEDQNDSDST) has biased composition (polar residues). 2 C2H2-type zinc fingers span residues 882-904 (YACD…KYEH) and 910-932 (HECG…MRLH). A C2H2-type 7; atypical zinc finger spans residues 938-959 (YQCDKCGKRFSHSGSYSQHMNH). The disordered stretch occupies residues 991-1117 (EHVGARASPS…QLSEEKTNEA (127 aa)). Acidic residues-rich tracts occupy residues 1013-1032 (EEDE…MEEL), 1042-1069 (QGEE…DEAE), and 1098-1109 (SEMESESESEQL).

The protein belongs to the delta-EF1/ZFH-1 C2H2-type zinc-finger family. In terms of assembly, interacts (via N-terminus) with SMARCA4/BRG1. In terms of processing, ubiquitinated, leading to degradation in a proteasome-dependent manner. Deubiquitinated by USP51, leading to stabilization. Expressed in the external germinal layer (EGL) and internal granular layer (IGL) of the cerebellum (at protein level).

The protein localises to the nucleus. Its function is as follows. Acts as a transcriptional repressor. Binds to E-box sequences in the immunoglobulin heavy chain enhancer as well as in the regulatory regions of many other tissue-specific genes. Represses E-cadherin promoter and induces an epithelial-mesenchymal transition (EMT) by recruiting SMARCA4/BRG1. Represses BCL6 transcription in the presence of the corepressor CTBP1. Positively regulates neuronal differentiation. Represses RCOR1 transcription activation during neurogenesis. Represses transcription by binding to the E box (5'-CANNTG-3'). In the absence of TGFB1, acts as a repressor of COL1A2 transcription via binding to the E-box in the upstream enhancer region. Promotes tumorigenicity by repressing stemness-inhibiting microRNAs. This chain is Zinc finger E-box-binding homeobox 1, found in Mus musculus (Mouse).